Consider the following 340-residue polypeptide: Phosphoribosylformylglycinamidine cyclo-ligase (340 aa).

The protein belongs to the AIR synthase family.

It localises to the cytoplasm. The catalysed reaction is 2-formamido-N(1)-(5-O-phospho-beta-D-ribosyl)acetamidine + ATP = 5-amino-1-(5-phospho-beta-D-ribosyl)imidazole + ADP + phosphate + H(+). It functions in the pathway purine metabolism; IMP biosynthesis via de novo pathway; 5-amino-1-(5-phospho-D-ribosyl)imidazole from N(2)-formyl-N(1)-(5-phospho-D-ribosyl)glycinamide: step 2/2. This Streptococcus pyogenes serotype M28 (strain MGAS6180) protein is Phosphoribosylformylglycinamidine cyclo-ligase.